The primary structure comprises 78 residues: Small ribosomal subunit protein uS17 (78 aa).

Belongs to the universal ribosomal protein uS17 family. In terms of assembly, part of the 30S ribosomal subunit.

Functionally, one of the primary rRNA binding proteins, it binds specifically to the 5'-end of 16S ribosomal RNA. This Agrobacterium fabrum (strain C58 / ATCC 33970) (Agrobacterium tumefaciens (strain C58)) protein is Small ribosomal subunit protein uS17.